We begin with the raw amino-acid sequence, 427 residues long: ATP-sensitive inward rectifier potassium channel 12 (427 aa).

Residues 1–77 (MTAASRANPY…LADMFTTCVD (77 aa)) lie on the Cytoplasmic side of the membrane. The residue at position 75 (Cys-75) is an S-nitrosocysteine. The helical transmembrane segment at 78–104 (IRWRYMLLIFSLAFLASWLLFGIIFWV) threads the bilayer. A 1,2-diacyl-sn-glycero-3-phospho-(1D-myo-inositol-4,5-bisphosphate) contacts are provided by Arg-79 and Arg-81. At 105–129 (IAVAHGDLEPAEGRGRTPCVLQVHG) the chain is on the extracellular side. An intrachain disulfide couples Cys-123 to Cys-155. Residues 130–146 (FMAAFLFSIETQTTIGY) constitute an intramembrane region (helical; Pore-forming). 4 residues coordinate K(+): Thr-143, Ile-144, Gly-145, and Tyr-146. Positions 143-148 (TIGYGL) match the Selectivity filter motif. Residues 147-155 (GLRCVTEEC) are Extracellular-facing. A helical membrane pass occupies residues 156–183 (PVAVFMVVAQSIVGCIIDSFMIGAIMAK). A 1,2-diacyl-sn-glycero-3-phospho-(1D-myo-inositol-4,5-bisphosphate) is bound by residues Lys-183 and Lys-188. Over 184–427 (MGRPKKRAQT…ERPYRRESEI (244 aa)) the chain is Cytoplasmic. Residues 387–427 (DEEDEVATDRDGRSPQPEHDFDRLQASSGALERPYRRESEI) are disordered. The segment covering 393 to 409 (ATDRDGRSPQPEHDFDR) has biased composition (basic and acidic residues). The PDZ-binding signature appears at 425 to 427 (SEI).

This sequence belongs to the inward rectifier-type potassium channel (TC 1.A.2.1) family. KCNJ12 subfamily. In terms of assembly, homotetramer. Forms heteromer with KCNJ4. Can form heteromeric channels with Kir2.6/KCNJ18. Association, via its PDZ-recognition domain, with LIN7A, LIN7B, LIN7C, DLG1, CASK and APBA1 plays a key role in its localization and trafficking. Highest level in cerebellum. Moderately found in kidney, forebrain and skeletal muscle. Not detected in uterus, liver and pancreas.

It localises to the membrane. Its subcellular location is the cell membrane. The protein resides in the sarcolemma. The protein localises to the T-tubule. It catalyses the reaction K(+)(in) = K(+)(out). With respect to regulation, activated by phosphatidylinositol 4,5-biphosphate (PtdIns(4,5)P2). PtdIns(4,5)P2 binding to the cytoplasmic side of the channel triggers a conformation change leading to channel opening. Inhibited by Ba(2+). Inward rectifying potassium channel that probably participates in controlling the resting membrane potential in electrically excitable cells. It probably participates in establishing action potential waveform and excitability of neuronal and muscle tissues. Inward rectifier potassium channels are characterized by a greater tendency to allow potassium to flow into the cell rather than out of it. Their voltage dependence is regulated by the concentration of extracellular potassium; as external potassium is raised, the voltage range of the channel opening shifts to more positive voltages. The inward rectification is mainly due to the blockage of outward current by internal magnesium. This is ATP-sensitive inward rectifier potassium channel 12 (Kcnj12) from Rattus norvegicus (Rat).